Consider the following 364-residue polypeptide: Caffeic acid 3-O-methyltransferase (364 aa).

131–137 contacts substrate; sequence MNQDKVL. Residues 163 to 181 are substrate binding; sequence AFEYHGTDSRFNRVFNEGM. The S-adenosyl-L-methionine site is built by G209, D232, D252, M253, and K266. Catalysis depends on H270, which acts as the Proton acceptor.

It belongs to the class I-like SAM-binding methyltransferase superfamily. Cation-independent O-methyltransferase family. COMT subfamily. Homodimer. Confined to the vascular tissues of organs undergoing lignification such as stems and roots.

The enzyme catalyses (E)-caffeate + S-adenosyl-L-methionine = (E)-ferulate + S-adenosyl-L-homocysteine + H(+). It carries out the reaction tricetin + 2 S-adenosyl-L-methionine = 3',5'-di-O-methyltricetin + 2 S-adenosyl-L-homocysteine + 2 H(+). It catalyses the reaction luteolin + S-adenosyl-L-methionine = chrysoeriol + S-adenosyl-L-homocysteine + H(+). The catalysed reaction is tricetin + S-adenosyl-L-methionine = 3'-O-methyltricetin + S-adenosyl-L-homocysteine + H(+). The protein operates within aromatic compound metabolism; phenylpropanoid biosynthesis. Catalyzes the conversion of caffeic acid to ferulic acid and of 5-hydroxyferulic acid to sinapic acid. The resulting products may subsequently be converted to the corresponding alcohols that are incorporated into lignins. Can use the flavone tricetin (5,7,3',4',5'-pentahydroxyflavone) as the preferred substrate and give rise to its 3',5'-dimethyl derivative, tricin (3',5'-dimethoxy-5,7,4'-trihydroxyflavone), as the major product, and selgin to a lower extent. Tricin exhibits potential benefits for human health including relaxant effect on smooth muscle of intestinal tissues, antioxidant effect, antihistaminic activity, and growth inhibition of human malignant breast tumor cells and colon cancer cells. Can also use luteolin, quercetin and 5-hydroxyferulic acid (5HF) as substrates. The polypeptide is Caffeic acid 3-O-methyltransferase (Zea mays (Maize)).